We begin with the raw amino-acid sequence, 334 residues long: Protein-methionine-sulfoxide reductase catalytic subunit MsrP (334 aa).

Residues 1 to 44 (MKKNQFLKESDVTAESVFFMKRRQVLKALGISAAALSLPHAAHA) constitute a signal peptide (tat-type signal). Residues Asn88, 91–92 (YE), Cys146, Thr181, Asn233, Arg238, and 249–251 (GIK) each bind Mo-molybdopterin.

Belongs to the MsrP family. Heterodimer of a catalytic subunit (MsrP) and a heme-binding subunit (MsrQ). It depends on Mo-molybdopterin as a cofactor. Post-translationally, predicted to be exported by the Tat system. The position of the signal peptide cleavage has not been experimentally proven.

It localises to the periplasm. The catalysed reaction is L-methionyl-[protein] + a quinone + H2O = L-methionyl-(S)-S-oxide-[protein] + a quinol. It catalyses the reaction L-methionyl-[protein] + a quinone + H2O = L-methionyl-(R)-S-oxide-[protein] + a quinol. In terms of biological role, part of the MsrPQ system that repairs oxidized periplasmic proteins containing methionine sulfoxide residues (Met-O), using respiratory chain electrons. Thus protects these proteins from oxidative-stress damage caused by reactive species of oxygen and chlorine generated by the host defense mechanisms. MsrPQ is essential for the maintenance of envelope integrity under bleach stress, rescuing a wide series of structurally unrelated periplasmic proteins from methionine oxidation, including the primary periplasmic chaperone SurA and the lipoprotein Pal. The catalytic subunit MsrP is non-stereospecific, being able to reduce both (R-) and (S-) diastereoisomers of methionine sulfoxide. The protein is Protein-methionine-sulfoxide reductase catalytic subunit MsrP of Escherichia coli O81 (strain ED1a).